The sequence spans 227 residues: 27 kDa A-type inclusion protein (227 aa).

Residues 4-210 adopt a coiled-coil conformation; it reads MPKQREMRRL…AECRRGNNGS (207 aa).

The protein is 27 kDa A-type inclusion protein of Bos taurus (Bovine).